A 339-amino-acid chain; its full sequence is Phenylalanine--tRNA ligase alpha subunit (339 aa).

Residue Glu254 coordinates Mg(2+).

The protein belongs to the class-II aminoacyl-tRNA synthetase family. Phe-tRNA synthetase alpha subunit type 1 subfamily. In terms of assembly, tetramer of two alpha and two beta subunits. Mg(2+) serves as cofactor.

Its subcellular location is the cytoplasm. It carries out the reaction tRNA(Phe) + L-phenylalanine + ATP = L-phenylalanyl-tRNA(Phe) + AMP + diphosphate + H(+). This chain is Phenylalanine--tRNA ligase alpha subunit, found in Clostridium botulinum (strain ATCC 19397 / Type A).